We begin with the raw amino-acid sequence, 612 residues long: Probable methyltransferase PMT9 (612 aa).

Over 1 to 14 (MKHFRTERVRATPK) the chain is Cytoplasmic. A helical; Signal-anchor for type II membrane protein transmembrane segment spans residues 15-35 (LFTYVLVGFIALLGLTCLYYG). The Lumenal portion of the chain corresponds to 36–612 (SSFAPGSRKS…LWSLPAISVS (577 aa)). Residues Asn107, Asn383, and Asn562 are each glycosylated (N-linked (GlcNAc...) asparagine).

The protein belongs to the methyltransferase superfamily.

It localises to the golgi apparatus membrane. In Arabidopsis thaliana (Mouse-ear cress), this protein is Probable methyltransferase PMT9.